A 385-amino-acid chain; its full sequence is MHMPKGFLSFGINIGIKDDTKDFGVIYSEIPCKATAVFTKNNFPGAPVIVGKEHVRSGVLQAIVINSKNSNVATGEKGIQNSREICKIIGESLDIKETLVLPSSTGVIGVPLKMEIILPACKKAKSLLKPGNLEEVAEAIMTTDTRKKISSRNIKTKSGQGTIYGIAKGAGMIEPNMATMLCYILSDVSLPEGTDLYSILKSSVDQSFNCLTIDSDTSTSDTVALLCNGLSGESSVQDFSKALTEICIDLTKLIATDGEGATKLIELTISGAKSEAQARKIGKSILNSPLVKTAIYGGDPNWGRLIMAVGKVFDEPIPFEGLQIYFGTLPVKEANPETLKKLSEYLKNNTEISLNVVLNVGTISMKFWGCDFTEKYIEENAYYTT.

The substrate site is built by Thr-142, Lys-168, Thr-179, Glu-259, Asn-380, and Thr-385. Thr-179 (nucleophile) is an active-site residue.

Belongs to the ArgJ family. As to quaternary structure, heterotetramer of two alpha and two beta chains.

The protein resides in the cytoplasm. It carries out the reaction N(2)-acetyl-L-ornithine + L-glutamate = N-acetyl-L-glutamate + L-ornithine. The catalysed reaction is L-glutamate + acetyl-CoA = N-acetyl-L-glutamate + CoA + H(+). It participates in amino-acid biosynthesis; L-arginine biosynthesis; L-ornithine and N-acetyl-L-glutamate from L-glutamate and N(2)-acetyl-L-ornithine (cyclic): step 1/1. The protein operates within amino-acid biosynthesis; L-arginine biosynthesis; N(2)-acetyl-L-ornithine from L-glutamate: step 1/4. In terms of biological role, catalyzes two activities which are involved in the cyclic version of arginine biosynthesis: the synthesis of N-acetylglutamate from glutamate and acetyl-CoA as the acetyl donor, and of ornithine by transacetylation between N(2)-acetylornithine and glutamate. The polypeptide is Arginine biosynthesis bifunctional protein ArgJ (Leptospira interrogans serogroup Icterohaemorrhagiae serovar copenhageni (strain Fiocruz L1-130)).